Reading from the N-terminus, the 60-residue chain is Potassium channel toxin alpha-KTx 29.1 (60 aa).

Positions 1-28 (MKSVCGVLIILVVLTTMLSISTFSTVGA) are cleaved as a signal peptide. Intrachain disulfides connect Cys32–Cys51, Cys40–Cys56, and Cys44–Cys58.

This sequence belongs to the short scorpion toxin superfamily. Potassium channel inhibitor family. Alpha-KTx 29 subfamily. Expressed by the venom gland.

The protein resides in the secreted. Functionally, weakly inhibits the Kv1.3/KCNA3 channel (1 uM of the toxin inhibits currents by 13.2%) and Kv7.1/KCNQ1 channel (10 uM of the toxin inhibits currents by 27.7%). This chain is Potassium channel toxin alpha-KTx 29.1, found in Lychas mucronatus (Chinese swimming scorpion).